The sequence spans 969 residues: Alpha-glucosidase (969 aa).

The N-terminal stretch at 1–24 (MMISTAYQSLFLTALFSAISIAVG) is a signal peptide. N-linked (GlcNAc...) asparagine glycosylation is found at Asn-37, Asn-67, Asn-99, Asn-116, Asn-139, Asn-146, Asn-209, Asn-245, Asn-249, Asn-331, Asn-406, Asn-429, Asn-462, and Asn-470. The active-site Nucleophile is the Asp-481. Glu-484 is an active-site residue. Asn-520, Asn-523, and Asn-589 each carry an N-linked (GlcNAc...) asparagine glycan. Catalysis depends on Asp-647, which acts as the Proton donor. Residues Asn-648, Asn-801, Asn-810, Asn-821, Asn-885, Asn-915, Asn-934, Asn-942, Asn-954, and Asn-966 are each glycosylated (N-linked (GlcNAc...) asparagine).

Belongs to the glycosyl hydrolase 31 family.

It is found in the secreted. The enzyme catalyses Hydrolysis of terminal, non-reducing (1-&gt;4)-linked alpha-D-glucose residues with release of alpha-D-glucose.. Hydrolyzes malto-oligosaccharides, but has a low activity toward soluble starch. The sequence is that of Alpha-glucosidase (agl1) from Schizosaccharomyces pombe (strain 972 / ATCC 24843) (Fission yeast).